The following is a 214-amino-acid chain: MRISPYGAGSVTTTAIFCSLFFVTGFFLPQPGGAALSLAVLLFLFFTLFFYRDPEREIPTEPGAVIAPADGKIVLKQSIDHPVTGDGSTLVSIFMSPFNVHVNRIPISGRVLNLNYVPGKYLMAFDHRSMTDNERMEITLETAAGTIWFCQVSGFVARRIVCDLKPGQEVTTGNLFGMIKLGSRVDIVLPPSVKVSASVGMKTVGGTTILGWIY.

The active-site Schiff-base intermediate with substrate; via pyruvic acid is the serine 183. Serine 183 is modified (pyruvic acid (Ser); by autocatalysis).

Belongs to the phosphatidylserine decarboxylase family. PSD-A subfamily. In terms of assembly, heterodimer of a large membrane-associated beta subunit and a small pyruvoyl-containing alpha subunit. Pyruvate serves as cofactor. Is synthesized initially as an inactive proenzyme. Formation of the active enzyme involves a self-maturation process in which the active site pyruvoyl group is generated from an internal serine residue via an autocatalytic post-translational modification. Two non-identical subunits are generated from the proenzyme in this reaction, and the pyruvate is formed at the N-terminus of the alpha chain, which is derived from the carboxyl end of the proenzyme. The post-translation cleavage follows an unusual pathway, termed non-hydrolytic serinolysis, in which the side chain hydroxyl group of the serine supplies its oxygen atom to form the C-terminus of the beta chain, while the remainder of the serine residue undergoes an oxidative deamination to produce ammonia and the pyruvoyl prosthetic group on the alpha chain.

It is found in the cell membrane. It carries out the reaction a 1,2-diacyl-sn-glycero-3-phospho-L-serine + H(+) = a 1,2-diacyl-sn-glycero-3-phosphoethanolamine + CO2. The protein operates within phospholipid metabolism; phosphatidylethanolamine biosynthesis; phosphatidylethanolamine from CDP-diacylglycerol: step 2/2. Catalyzes the formation of phosphatidylethanolamine (PtdEtn) from phosphatidylserine (PtdSer). The protein is Phosphatidylserine decarboxylase proenzyme of Chlorobaculum parvum (strain DSM 263 / NCIMB 8327) (Chlorobium vibrioforme subsp. thiosulfatophilum).